The following is a 293-amino-acid chain: Ribosomal protein L11 methyltransferase (293 aa).

Residues Thr145, Gly166, Asp188, and Asn230 each coordinate S-adenosyl-L-methionine.

Belongs to the methyltransferase superfamily. PrmA family.

It is found in the cytoplasm. It catalyses the reaction L-lysyl-[protein] + 3 S-adenosyl-L-methionine = N(6),N(6),N(6)-trimethyl-L-lysyl-[protein] + 3 S-adenosyl-L-homocysteine + 3 H(+). In terms of biological role, methylates ribosomal protein L11. This Haemophilus ducreyi (strain 35000HP / ATCC 700724) protein is Ribosomal protein L11 methyltransferase.